Reading from the N-terminus, the 449-residue chain is Adenylosuccinate synthetase (449 aa).

GTP contacts are provided by residues G12 to K18 and G40 to T42. Residue D13 is the Proton acceptor of the active site. Mg(2+) is bound by residues D13 and G40. Residues D13–K16, N38–H41, T128, R142, Q223, T238, and R302 contribute to the IMP site. H41 serves as the catalytic Proton donor. T298–R304 is a binding site for substrate. GTP-binding positions include R304, K330–D332, and S412–G414.

The protein belongs to the adenylosuccinate synthetase family. As to quaternary structure, homodimer. Mg(2+) serves as cofactor.

It is found in the cytoplasm. The enzyme catalyses IMP + L-aspartate + GTP = N(6)-(1,2-dicarboxyethyl)-AMP + GDP + phosphate + 2 H(+). The protein operates within purine metabolism; AMP biosynthesis via de novo pathway; AMP from IMP: step 1/2. Functionally, plays an important role in the de novo pathway of purine nucleotide biosynthesis. Catalyzes the first committed step in the biosynthesis of AMP from IMP. In Synechococcus sp. (strain JA-2-3B'a(2-13)) (Cyanobacteria bacterium Yellowstone B-Prime), this protein is Adenylosuccinate synthetase.